The sequence spans 609 residues: Isocitrate dehydrogenase kinase/phosphatase (609 aa).

ATP is bound by residues 325–331 and K346; that span reads APGIKGM. Residue D381 is part of the active site.

It belongs to the AceK family.

Its subcellular location is the cytoplasm. It carries out the reaction L-seryl-[isocitrate dehydrogenase] + ATP = O-phospho-L-seryl-[isocitrate dehydrogenase] + ADP + H(+). Its function is as follows. Bifunctional enzyme which can phosphorylate or dephosphorylate isocitrate dehydrogenase (IDH) on a specific serine residue. This is a regulatory mechanism which enables bacteria to bypass the Krebs cycle via the glyoxylate shunt in response to the source of carbon. When bacteria are grown on glucose, IDH is fully active and unphosphorylated, but when grown on acetate or ethanol, the activity of IDH declines drastically concomitant with its phosphorylation. The protein is Isocitrate dehydrogenase kinase/phosphatase of Acidovorax sp. (strain JS42).